A 345-amino-acid chain; its full sequence is Phosphoribosylformylglycinamidine cyclo-ligase (345 aa).

This sequence belongs to the AIR synthase family.

It localises to the cytoplasm. It carries out the reaction 2-formamido-N(1)-(5-O-phospho-beta-D-ribosyl)acetamidine + ATP = 5-amino-1-(5-phospho-beta-D-ribosyl)imidazole + ADP + phosphate + H(+). The protein operates within purine metabolism; IMP biosynthesis via de novo pathway; 5-amino-1-(5-phospho-D-ribosyl)imidazole from N(2)-formyl-N(1)-(5-phospho-D-ribosyl)glycinamide: step 2/2. The polypeptide is Phosphoribosylformylglycinamidine cyclo-ligase (Salmonella choleraesuis (strain SC-B67)).